Consider the following 452-residue polypeptide: MNSGILQVFQGELICPLCMNYFIDPVTIDCGHSFCRPCFYLNWQDIPFLVQCSECTKSTEQINLKTNIHLKKMASLARKVSLWLFLSSEEQMCGTHRETKKIFCEVDRSLLCLLCSSSQEHRYHRHRPIEWAAEEHREKLLQKMQSLWEKACENHRNLNVETTRTRCWKDYVNLRLEAIRAEYQKMPAFHHEEEKHNLEMLKKKGKEIFHRLHLSKAKMAHRMEILRGMYEELNEMCHKPDVELLQAFGDILHRSESVLLHMPQPLNPELSAGPITGLRDRLNQFRVHITLHHEEANNDIFLYEILRSMCIGCDHQDVPYFTATPRSFLAWGVQTFTSGKYYWEVHVGDSWNWAFGVCNMYRKEKNQNEKIDGKAGLFLLGCVKNDIQCSLFTTSPLMLQYIPKPTSRVGLFLDCEAKTVSFVDVNQSSLIYTIPNCSFSPPLRPIFCCIHF.

The RING-type zinc-finger motif lies at 15 to 56 (CPLCMNYFIDPVTIDCGHSFCRPCFYLNWQDIPFLVQCSECT). A B box-type zinc finger spans residues 88–129 (SEEQMCGTHRETKKIFCEVDRSLLCLLCSSSQEHRYHRHRPI). Zn(2+)-binding residues include C93, H96, C115, and H121. One can recognise a B30.2/SPRY domain in the interval 269–452 (ELSAGPITGL…LRPIFCCIHF (184 aa)).

Belongs to the TRIM/RBCC family. Preferentially expressed in testis.

This chain is Tripartite motif-containing protein 49 (TRIM49), found in Homo sapiens (Human).